Consider the following 135-residue polypeptide: DNA-directed RNA polymerase subunit omega (135 aa).

The disordered stretch occupies residues 107–135 (ASQESQDYEVDGEIDDEINDQDGDEEVSV). The segment covering 112 to 135 (QDYEVDGEIDDEINDQDGDEEVSV) has biased composition (acidic residues).

It belongs to the RNA polymerase subunit omega family. In terms of assembly, the RNAP catalytic core consists of 2 alpha, 1 beta, 1 beta' and 1 omega subunit. When a sigma factor is associated with the core the holoenzyme is formed, which can initiate transcription.

The catalysed reaction is RNA(n) + a ribonucleoside 5'-triphosphate = RNA(n+1) + diphosphate. Functionally, promotes RNA polymerase assembly. Latches the N- and C-terminal regions of the beta' subunit thereby facilitating its interaction with the beta and alpha subunits. The sequence is that of DNA-directed RNA polymerase subunit omega from Wolbachia pipientis wMel.